We begin with the raw amino-acid sequence, 478 residues long: Aspartate ammonia-lyase (478 aa).

Residues Thr-109, Ser-148, Thr-149, Asn-150, and Thr-195 each coordinate L-aspartate. Positions 326 to 335 are SS loop; the sequence is GSSIMPGKVN. Ser-327 serves as the catalytic Proton acceptor. 2 residues coordinate L-aspartate: Ser-328 and Lys-333.

It belongs to the class-II fumarase/aspartase family. Aspartase subfamily. As to quaternary structure, homotetramer.

It carries out the reaction L-aspartate = fumarate + NH4(+). Functionally, catalyzes the reversible conversion of L-aspartate to fumarate and ammonia. The sequence is that of Aspartate ammonia-lyase from Pseudomonas fluorescens.